We begin with the raw amino-acid sequence, 261 residues long: Tryptophan synthase alpha chain (261 aa).

Residues Glu47 and Asp58 each act as proton acceptor in the active site.

Belongs to the TrpA family. Tetramer of two alpha and two beta chains.

It catalyses the reaction (1S,2R)-1-C-(indol-3-yl)glycerol 3-phosphate + L-serine = D-glyceraldehyde 3-phosphate + L-tryptophan + H2O. It functions in the pathway amino-acid biosynthesis; L-tryptophan biosynthesis; L-tryptophan from chorismate: step 5/5. Functionally, the alpha subunit is responsible for the aldol cleavage of indoleglycerol phosphate to indole and glyceraldehyde 3-phosphate. The sequence is that of Tryptophan synthase alpha chain from Neisseria meningitidis serogroup A / serotype 4A (strain DSM 15465 / Z2491).